The sequence spans 312 residues: Probable rRNA-processing protein EBP2 (312 aa).

A disordered region spans residues 1–32; that stretch reads MLHHEDESSPESDSDFDASELTDKELQEAFSQ. A compositionally biased stretch (acidic residues) spans 8–20; that stretch reads SSPESDSDFDASE. The stretch at 140 to 176 forms a coiled coil; the sequence is EMAKTDQHMQKIRHKLQLKQASMEKSEKAKQLRALRK. Residues 211-312 form a disordered region; it reads LDFLEGDQTP…VRQKMKSKRR (102 aa). A compositionally biased stretch (basic residues) spans 282–312; the sequence is KGPHRPGKKGGKNANKRPGKNVRQKMKSKRR.

This sequence belongs to the EBP2 family.

The protein resides in the nucleus. Its subcellular location is the nucleolus. Functionally, required for the processing of the 27S pre-rRNA. The chain is Probable rRNA-processing protein EBP2 (ebna1bp2) from Xenopus laevis (African clawed frog).